The following is a 237-amino-acid chain: uncharacterized protein (237 aa).

Residues 13-218 (VVGLSGGVAT…KSWKPYIFRV (206 aa)) enclose the DPCK domain. 18–25 (GGVATGKS) contributes to the ATP binding site.

It belongs to the CoaE family.

This is an uncharacterized protein from Caenorhabditis elegans.